The chain runs to 652 residues: Nucleolar GTP-binding protein 1 (652 aa).

The region spanning 169–341 (RTIIICGFPN…VKTEACERLL (173 aa)) is the OBG-type G domain. Residues 175–182 (GFPNVGKS), 221–225 (DTPGI), and 289–292 (NKID) each bind GTP. The segment at 501–521 (RLSSRKNKPVIPRNKQPKVRD) is disordered.

It belongs to the TRAFAC class OBG-HflX-like GTPase superfamily. OBG GTPase family. NOG subfamily.

Its subcellular location is the nucleus. It localises to the nucleolus. Functionally, involved in the biogenesis of the 60S ribosomal subunit. Required for normal assembly of the mitotic spindle. May be involved in both centrosome-dependent and centrosome-independent spindle assembly programs. Acts as a TP53 repressor, preventing TP53 stabilization and cell cycle arrest. This Drosophila melanogaster (Fruit fly) protein is Nucleolar GTP-binding protein 1.